Reading from the N-terminus, the 231-residue chain is MKLPQPLFQGTLIRRYQRFLADVELDDGTVVTAHTPNTGSMMGCACPGNRVLLSKSASLTRKYPHSWELVQADGTWVGINTQLPNLLAREAILDGTISELSGYQQIRGEVPYGSGSRIDLLLSGEQGLCYVETKNVTLVEDGVALFPDAVSARGQKHLRELMEMVRQGHRAVNLFIVQRADGAALAPADAIDPVYGRLLREAAQNGVEILAYRAEVTRTEVRLERALPVLL.

This sequence belongs to the SfsA family.

This chain is Sugar fermentation stimulation protein homolog, found in Citrifermentans bemidjiense (strain ATCC BAA-1014 / DSM 16622 / JCM 12645 / Bem) (Geobacter bemidjiensis).